The following is a 433-amino-acid chain: Enolase (433 aa).

Gln-164 contributes to the (2R)-2-phosphoglycerate binding site. Glu-206 acts as the Proton donor in catalysis. Asp-243, Glu-289, and Asp-316 together coordinate Mg(2+). Residues Lys-341, Arg-370, Ser-371, and Lys-392 each contribute to the (2R)-2-phosphoglycerate site. The active-site Proton acceptor is Lys-341.

It belongs to the enolase family. Requires Mg(2+) as cofactor.

The protein resides in the cytoplasm. It localises to the secreted. It is found in the cell surface. The enzyme catalyses (2R)-2-phosphoglycerate = phosphoenolpyruvate + H2O. It participates in carbohydrate degradation; glycolysis; pyruvate from D-glyceraldehyde 3-phosphate: step 4/5. Functionally, catalyzes the reversible conversion of 2-phosphoglycerate (2-PG) into phosphoenolpyruvate (PEP). It is essential for the degradation of carbohydrates via glycolysis. The polypeptide is Enolase (Borreliella burgdorferi (strain ZS7) (Borrelia burgdorferi)).